Here is a 397-residue protein sequence, read N- to C-terminus: Enoyl-[acyl-carrier-protein] reductase [NADH] (397 aa).

NAD(+) is bound by residues 48-53 (GASTGY), 74-75 (FE), 111-112 (DA), and 139-140 (VA). Tyr225 provides a ligand contact to substrate. Residue Tyr235 is the Proton donor of the active site. Residues Lys244 and 273 to 275 (VVT) contribute to the NAD(+) site.

The protein belongs to the TER reductase family. As to quaternary structure, monomer.

It catalyses the reaction a 2,3-saturated acyl-[ACP] + NAD(+) = a (2E)-enoyl-[ACP] + NADH + H(+). The protein operates within lipid metabolism; fatty acid biosynthesis. In terms of biological role, involved in the final reduction of the elongation cycle of fatty acid synthesis (FAS II). Catalyzes the reduction of a carbon-carbon double bond in an enoyl moiety that is covalently linked to an acyl carrier protein (ACP). The protein is Enoyl-[acyl-carrier-protein] reductase [NADH] of Burkholderia pseudomallei (strain 1106a).